Consider the following 130-residue polypeptide: Phosphoribosyl-AMP cyclohydrolase (130 aa).

Asp-78 is a binding site for Mg(2+). Zn(2+) is bound at residue Cys-79. Asp-80 and Asp-82 together coordinate Mg(2+). Zn(2+) is bound by residues Cys-96 and Cys-103.

Belongs to the PRA-CH family. Homodimer. Mg(2+) serves as cofactor. The cofactor is Zn(2+).

Its subcellular location is the cytoplasm. It catalyses the reaction 1-(5-phospho-beta-D-ribosyl)-5'-AMP + H2O = 1-(5-phospho-beta-D-ribosyl)-5-[(5-phospho-beta-D-ribosylamino)methylideneamino]imidazole-4-carboxamide. The protein operates within amino-acid biosynthesis; L-histidine biosynthesis; L-histidine from 5-phospho-alpha-D-ribose 1-diphosphate: step 3/9. Functionally, catalyzes the hydrolysis of the adenine ring of phosphoribosyl-AMP. In Methylobacillus flagellatus (strain ATCC 51484 / DSM 6875 / VKM B-1610 / KT), this protein is Phosphoribosyl-AMP cyclohydrolase.